The chain runs to 804 residues: Leucine--tRNA ligase (804 aa).

Positions 40-51 (PYPSGAGLHVGH) match the 'HIGH' region motif. Residues 576–580 (KMSKS) carry the 'KMSKS' region motif. ATP is bound at residue Lys-579.

The protein belongs to the class-I aminoacyl-tRNA synthetase family.

The protein localises to the cytoplasm. It catalyses the reaction tRNA(Leu) + L-leucine + ATP = L-leucyl-tRNA(Leu) + AMP + diphosphate. The sequence is that of Leucine--tRNA ligase from Staphylococcus epidermidis (strain ATCC 35984 / DSM 28319 / BCRC 17069 / CCUG 31568 / BM 3577 / RP62A).